A 148-amino-acid polypeptide reads, in one-letter code: Aspartate carbamoyltransferase regulatory chain (148 aa).

Cys106, Cys111, Cys134, and Cys137 together coordinate Zn(2+).

It belongs to the PyrI family. Contains catalytic and regulatory chains. It depends on Zn(2+) as a cofactor.

Involved in allosteric regulation of aspartate carbamoyltransferase. This chain is Aspartate carbamoyltransferase regulatory chain, found in Methanococcus maripaludis (strain C7 / ATCC BAA-1331).